The following is a 132-amino-acid chain: Vesicle transport protein GOT1A (132 aa).

At 1 to 16 (MISITEWQKIGVGTTG) the chain is on the cytoplasmic side. The helical transmembrane segment at 17-37 (FGIFFILFGMLLYFDSVLLAF) threads the bilayer. Over 38–39 (GN) the chain is Lumenal. Residues 40–60 (LLFLTGLSLIIGLRRTFSFFF) form a helical membrane-spanning segment. Over 61-68 (QRHKFKGT) the chain is Cytoplasmic. The helical transmembrane segment at 69–89 (SFFLGGVVIVLLRWPLLGMCL) threads the bilayer. The Lumenal portion of the chain corresponds to 90 to 100 (ETYGFFSLFRG). Residues 101 to 121 (FFPVAFGFLGSASNIPFLSAL) traverse the membrane as a helical segment. Over 122-132 (FQRLQGTSSMV) the chain is Cytoplasmic.

Belongs to the GOT1 family.

The protein localises to the golgi apparatus membrane. Functionally, may be involved in fusion of ER-derived transport vesicles with the Golgi complex. This chain is Vesicle transport protein GOT1A, found in Bos taurus (Bovine).